The sequence spans 223 residues: Thymidine kinase (223 aa).

ATP is bound by residues 19–26 (GPMFAGKT) and 96–99 (DEVQ). Glu-97 serves as the catalytic Proton acceptor. Cys-153, Cys-156, Cys-191, and His-194 together coordinate Zn(2+).

It belongs to the thymidine kinase family. Homotetramer.

The protein localises to the cytoplasm. The enzyme catalyses thymidine + ATP = dTMP + ADP + H(+). This chain is Thymidine kinase, found in Ureaplasma parvum serovar 3 (strain ATCC 27815 / 27 / NCTC 11736).